A 486-amino-acid chain; its full sequence is Glutamyl-tRNA(Gln) amidotransferase subunit A (486 aa).

Catalysis depends on charge relay system residues Lys75 and Ser150. The Acyl-ester intermediate role is filled by Ser174.

It belongs to the amidase family. GatA subfamily. In terms of assembly, heterotrimer of A, B and C subunits.

The enzyme catalyses L-glutamyl-tRNA(Gln) + L-glutamine + ATP + H2O = L-glutaminyl-tRNA(Gln) + L-glutamate + ADP + phosphate + H(+). Functionally, allows the formation of correctly charged Gln-tRNA(Gln) through the transamidation of misacylated Glu-tRNA(Gln) in organisms which lack glutaminyl-tRNA synthetase. The reaction takes place in the presence of glutamine and ATP through an activated gamma-phospho-Glu-tRNA(Gln). The chain is Glutamyl-tRNA(Gln) amidotransferase subunit A from Nostoc sp. (strain PCC 7120 / SAG 25.82 / UTEX 2576).